The sequence spans 425 residues: Protein let-756 (425 aa).

Disordered stretches follow at residues 277 to 298 and 314 to 425; these read LEEK…LRKE and EEEL…QRYP. Basic residues predominate over residues 281 to 291; it reads KRRREKKKRRR. The span at 329 to 340 shows a compositional bias: polar residues; the sequence is ASTQTRYNRPQN. Over residues 378–389 the composition is skewed to basic residues; that stretch reads HNSHHHHHHHPR. Polar residues predominate over residues 395–425; it reads DPQQRHQSQQHYLAQTVSNPNRQNVNYQRYP.

The protein belongs to the heparin-binding growth factors family. In terms of assembly, interacts with pal-1. In terms of tissue distribution, expressed in pharynx, CAN neuron and body wall muscles.

It is found in the nucleus. The protein localises to the membrane. In terms of biological role, required for larval development. Probably by binding receptor egl-15, negatively regulates membrane protrusion from body wall muscles during larval development. The sequence is that of Protein let-756 (let-756) from Caenorhabditis elegans.